The primary structure comprises 268 residues: Small ribosomal subunit protein uS2 (268 aa).

Positions 228–268 (QLDSEQDYEDFDESISDEYDDYEDEEEYEEQDLEVDASEDE) are disordered. Over residues 231 to 268 (SEQDYEDFDESISDEYDDYEDEEEYEEQDLEVDASEDE) the composition is skewed to acidic residues.

It belongs to the universal ribosomal protein uS2 family.

The sequence is that of Small ribosomal subunit protein uS2 from Rippkaea orientalis (strain PCC 8801 / RF-1) (Cyanothece sp. (strain PCC 8801)).